The sequence spans 95 residues: Aspartyl/glutamyl-tRNA(Asn/Gln) amidotransferase subunit C (95 aa).

Belongs to the GatC family. In terms of assembly, heterotrimer of A, B and C subunits.

It catalyses the reaction L-glutamyl-tRNA(Gln) + L-glutamine + ATP + H2O = L-glutaminyl-tRNA(Gln) + L-glutamate + ADP + phosphate + H(+). It carries out the reaction L-aspartyl-tRNA(Asn) + L-glutamine + ATP + H2O = L-asparaginyl-tRNA(Asn) + L-glutamate + ADP + phosphate + 2 H(+). Functionally, allows the formation of correctly charged Asn-tRNA(Asn) or Gln-tRNA(Gln) through the transamidation of misacylated Asp-tRNA(Asn) or Glu-tRNA(Gln) in organisms which lack either or both of asparaginyl-tRNA or glutaminyl-tRNA synthetases. The reaction takes place in the presence of glutamine and ATP through an activated phospho-Asp-tRNA(Asn) or phospho-Glu-tRNA(Gln). The sequence is that of Aspartyl/glutamyl-tRNA(Asn/Gln) amidotransferase subunit C from Pseudomonas putida (strain ATCC 700007 / DSM 6899 / JCM 31910 / BCRC 17059 / LMG 24140 / F1).